The chain runs to 342 residues: tRNA N6-adenosine threonylcarbamoyltransferase (342 aa).

Residues His120 and His124 each coordinate Fe cation. Residues 142–146 (VVSGG), Asp175, Gly188, Asp192, and Asn281 each bind substrate. Asp310 lines the Fe cation pocket.

This sequence belongs to the KAE1 / TsaD family. Fe(2+) serves as cofactor.

It is found in the cytoplasm. It carries out the reaction L-threonylcarbamoyladenylate + adenosine(37) in tRNA = N(6)-L-threonylcarbamoyladenosine(37) in tRNA + AMP + H(+). In terms of biological role, required for the formation of a threonylcarbamoyl group on adenosine at position 37 (t(6)A37) in tRNAs that read codons beginning with adenine. Is involved in the transfer of the threonylcarbamoyl moiety of threonylcarbamoyl-AMP (TC-AMP) to the N6 group of A37, together with TsaE and TsaB. TsaD likely plays a direct catalytic role in this reaction. This chain is tRNA N6-adenosine threonylcarbamoyltransferase, found in Geobacillus kaustophilus (strain HTA426).